We begin with the raw amino-acid sequence, 182 residues long: ATP synthase subunit delta, mitochondrial (182 aa).

Residues 1–17 constitute a mitochondrion transit peptide; that stretch reads MFRTFGRRLVSCTLPLL.

It belongs to the ATPase epsilon chain family. As to quaternary structure, F-type ATPases have 2 components, F(1) - the catalytic core - and F(o) - the membrane proton channel. F(1) has five subunits: alpha(3), beta(3), gamma(1), delta(1), epsilon(1), plus the additional subunit P18 (Tb427.05.1710) that is not present in F(1)F(o) ATP synthase from metazoa. Subunit P18 (Tb927.5.1710) interacts with the alpha subunit with a 1:1 stoichiometry; the interaction is direct. Subunit gamma is part of the central stalk. F(o) has three main subunits: a, b and c. The trypanosomal ATPase complex contains additional subunits that are not present in the F(1)F(o) ATP synthase from metazoa.

The protein localises to the mitochondrion. It is found in the mitochondrion inner membrane. In terms of biological role, mitochondrial membrane ATP synthase (F(1)F(o) ATP synthase) produces ATP from ADP in the presence of a proton gradient across the membrane which is generated by electron transport complexes of the respiratory chain. F-type ATPases consist of two structural domains, F(1) - containing the extramembraneous catalytic core, and F(o) - containing the membrane proton channel, linked together by a central stalk and a peripheral stalk. During catalysis, ATP synthesis in the catalytic domain of F(1) is coupled via a rotary mechanism of the central stalk subunits to proton translocation. Subunits alpha and beta form the catalytic core in F(1). Rotation of the central stalk against the surrounding alpha(3)beta(3) subunits leads to hydrolysis of ATP in three separate catalytic sites on the beta subunits. Contrary to the procyclic, insect form that requires F(1)F(o) ATP synthase for ATP synthesis, the bloodstream form relies on ATP hydrolysis by F(1)F(o) ATP synthase to maintain its mitochondrial membrane potential. The chain is ATP synthase subunit delta, mitochondrial from Trypanosoma brucei brucei.